Here is a 477-residue protein sequence, read N- to C-terminus: Bifunctional protein HldE (477 aa).

The tract at residues 1 to 318 (MKVTLSEFER…ENAVRGRADT (318 aa)) is ribokinase. Position 179 is an N6-acetyllysine (Lys-179). 195-198 (NLSE) contacts ATP. Residue Asp-264 is part of the active site. The tract at residues 344 to 477 (MTNGVFDILH…IKKIQQDKKG (134 aa)) is cytidylyltransferase.

The protein in the N-terminal section; belongs to the carbohydrate kinase PfkB family. This sequence in the C-terminal section; belongs to the cytidylyltransferase family. Homodimer.

The enzyme catalyses D-glycero-beta-D-manno-heptose 7-phosphate + ATP = D-glycero-beta-D-manno-heptose 1,7-bisphosphate + ADP + H(+). The catalysed reaction is D-glycero-beta-D-manno-heptose 1-phosphate + ATP + H(+) = ADP-D-glycero-beta-D-manno-heptose + diphosphate. Its pathway is nucleotide-sugar biosynthesis; ADP-L-glycero-beta-D-manno-heptose biosynthesis; ADP-L-glycero-beta-D-manno-heptose from D-glycero-beta-D-manno-heptose 7-phosphate: step 1/4. The protein operates within nucleotide-sugar biosynthesis; ADP-L-glycero-beta-D-manno-heptose biosynthesis; ADP-L-glycero-beta-D-manno-heptose from D-glycero-beta-D-manno-heptose 7-phosphate: step 3/4. Functionally, catalyzes the phosphorylation of D-glycero-D-manno-heptose 7-phosphate at the C-1 position to selectively form D-glycero-beta-D-manno-heptose-1,7-bisphosphate. Its function is as follows. Catalyzes the ADP transfer from ATP to D-glycero-beta-D-manno-heptose 1-phosphate, yielding ADP-D-glycero-beta-D-manno-heptose. The chain is Bifunctional protein HldE from Shigella boydii serotype 18 (strain CDC 3083-94 / BS512).